Consider the following 560-residue polypeptide: Digoxin reductase (560 aa).

A signal peptide (tat-type signal) is located at residues 1–48 (MEYGKCRGIERGMGRRDFLKAATLLGATAAGAGMLAGCAPKSASEAQA).

Belongs to the FAD-dependent oxidoreductase 2 family. In terms of assembly, may form a membrane-associated complex with Cgr1. The cofactor is FAD. It depends on [4Fe-4S] cluster as a cofactor. Predicted to be exported by the Tat system. The position of the signal peptide cleavage has not been experimentally proven.

It is found in the cell membrane. The catalysed reaction is digoxin + 2 Fe(II)-[cytochrome c] + 3 H(+) = dihydrodigoxin + 2 Fe(III)-[cytochrome c]. It carries out the reaction digitoxin + 2 Fe(II)-[cytochrome c] + 3 H(+) = dihydrodigitoxin + 2 Fe(III)-[cytochrome c]. It catalyses the reaction digoxigenin + 2 Fe(II)-[cytochrome c] + 3 H(+) = dihydrodigoxigenin + 2 Fe(III)-[cytochrome c]. The enzyme catalyses ouabain + 2 Fe(II)-[cytochrome c] + 3 H(+) = dihydroouabain + 2 Fe(III)-[cytochrome c]. The catalysed reaction is ouabagenin + 2 Fe(II)-[cytochrome c] + 3 H(+) = dihydroouabagenin + 2 Fe(III)-[cytochrome c]. Its function is as follows. Involved in the inactivation of the cardiac medication and plant natural product digoxin, thus decreasing drug efficacy and toxicity. Catalyzes the reduction of the alpha,beta-unsaturated butyrolactone ring of digoxin to the inactive metabolite dihydrodigoxin. Likely uses the cytochrome Cgr1 as the physiological electron donor, encoded by the adjacent gene in the locus. Only reduces digoxin and other cardenolide toxins, such as digitoxin, digoxigenin, ouabain and ouabagenin. Therefore is a specialized enzyme present in some gut bacteria E.lenta that protects their human host against ingested plant toxins. This chain is Digoxin reductase, found in Eggerthella lenta (strain ATCC 25559 / DSM 2243 / CCUG 17323 / JCM 9979 / KCTC 3265 / NCTC 11813 / VPI 0255 / 1899 B) (Eubacterium lentum).